Reading from the N-terminus, the 155-residue chain is 3-hydroxyacyl-[acyl-carrier-protein] dehydratase FabZ (155 aa).

The active site involves H57.

Belongs to the thioester dehydratase family. FabZ subfamily.

Its subcellular location is the cytoplasm. It catalyses the reaction a (3R)-hydroxyacyl-[ACP] = a (2E)-enoyl-[ACP] + H2O. In terms of biological role, involved in unsaturated fatty acids biosynthesis. Catalyzes the dehydration of short chain beta-hydroxyacyl-ACPs and long chain saturated and unsaturated beta-hydroxyacyl-ACPs. The sequence is that of 3-hydroxyacyl-[acyl-carrier-protein] dehydratase FabZ from Cereibacter sphaeroides (strain KD131 / KCTC 12085) (Rhodobacter sphaeroides).